A 394-amino-acid polypeptide reads, in one-letter code: ATP-dependent RNA helicase fal1 (394 aa).

Positions 21-49 (SSFEEMNLKEDLLRGIYAYGYETPSAVQS) match the Q motif motif. Residues 52-222 (IIQICKGRDV…NKFTTNPVRI (171 aa)) enclose the Helicase ATP-binding domain. Position 65 to 72 (65 to 72 (AQSGTGKT)) interacts with ATP. Ser-67 carries the phosphoserine modification. The DEAD box motif lies at 170-173 (DEAD). In terms of domain architecture, Helicase C-terminal spans 233–394 (GLKQYFIAVE…EMPMNIGDMV (162 aa)).

Belongs to the DEAD box helicase family. DDX48/FAL1 subfamily.

It is found in the nucleus. It localises to the nucleolus. It carries out the reaction ATP + H2O = ADP + phosphate + H(+). Functionally, ATP-dependent RNA helicase involved in 40S ribosomal subunit biogenesis. Required for the processing and cleavage of 35S pre-rRNA at sites A0, A1, and A2, leading to mature 18S rRNA. This Schizosaccharomyces pombe (strain 972 / ATCC 24843) (Fission yeast) protein is ATP-dependent RNA helicase fal1 (tif412).